The primary structure comprises 178 residues: Vegetative protein (178 aa).

Disordered stretches follow at residues 67–102 and 138–158; these read AGRR…AAAG and NRRP…DIKL. Positions 76 to 90 are enriched in low complexity; the sequence is PAARSAVTAAPAAVG.

The sequence is that of Vegetative protein (vegA) from Myxococcus xanthus.